A 260-amino-acid polypeptide reads, in one-letter code: MFEINVDPVAFSIGSLVVKWYGIMMALGVIALVSWIFWRIKRGADISYDTVLTAAIIAIPSGIIFSKLLHVIDAWEYYSLNPGAILSGEGLTIFGAIIGATIGLWIYSRYSHFNLGYLLDVAVPGILLGQAIGRVGCLLNGCCYGEYGGSGCSVIYTNPASAAPYGVEVVPTQAYEIIFLLCLFAFSLFIAKKLRPDGQLFLLYISLYAAWRVAIGFVRVNDDFALGLEQAQVVGLILIALAVPFFIYRQRKQKEADKNT.

4 helical membrane-spanning segments follow: residues 17-37, 52-72, 85-105, and 113-133; these read VVKW…SWIF, LTAA…LHVI, ILSG…IGLW, and FNLG…QAIG. R134 lines the a 1,2-diacyl-sn-glycero-3-phospho-(1'-sn-glycerol) pocket. Helical transmembrane passes span 170–190, 198–218, and 227–247; these read VPTQ…SLFI, GQLF…IGFV, and GLEQ…PFFI.

Belongs to the Lgt family.

It localises to the cell membrane. The enzyme catalyses L-cysteinyl-[prolipoprotein] + a 1,2-diacyl-sn-glycero-3-phospho-(1'-sn-glycerol) = an S-1,2-diacyl-sn-glyceryl-L-cysteinyl-[prolipoprotein] + sn-glycerol 1-phosphate + H(+). The protein operates within protein modification; lipoprotein biosynthesis (diacylglyceryl transfer). Its function is as follows. Catalyzes the transfer of the diacylglyceryl group from phosphatidylglycerol to the sulfhydryl group of the N-terminal cysteine of a prolipoprotein, the first step in the formation of mature lipoproteins. This chain is Phosphatidylglycerol--prolipoprotein diacylglyceryl transferase, found in Dehalococcoides mccartyi (strain ATCC BAA-2266 / KCTC 15142 / 195) (Dehalococcoides ethenogenes (strain 195)).